Here is a 729-residue protein sequence, read N- to C-terminus: Fatty acid oxidation complex subunit alpha (729 aa).

The enoyl-CoA hydratase/isomerase stretch occupies residues 1-189 (MLYKGDTLYL…KIGLVDGVVK (189 aa)). Aspartate 296 lines the substrate pocket. Residues 311–729 (ETPKQAAVLG…ARPVGSLKTA (419 aa)) are 3-hydroxyacyl-CoA dehydrogenase. Residues methionine 324, aspartate 343, 400-402 (VVE), lysine 407, and serine 429 each bind NAD(+). Histidine 450 (for 3-hydroxyacyl-CoA dehydrogenase activity) is an active-site residue. NAD(+) is bound at residue asparagine 453. Asparagine 500 and tyrosine 660 together coordinate substrate. Residues 708 to 729 (RHNEPYYPPVEPARPVGSLKTA) are disordered.

In the N-terminal section; belongs to the enoyl-CoA hydratase/isomerase family. The protein in the C-terminal section; belongs to the 3-hydroxyacyl-CoA dehydrogenase family. Heterotetramer of two alpha chains (FadB) and two beta chains (FadA).

The catalysed reaction is a (3S)-3-hydroxyacyl-CoA + NAD(+) = a 3-oxoacyl-CoA + NADH + H(+). It catalyses the reaction a (3S)-3-hydroxyacyl-CoA = a (2E)-enoyl-CoA + H2O. It carries out the reaction a 4-saturated-(3S)-3-hydroxyacyl-CoA = a (3E)-enoyl-CoA + H2O. The enzyme catalyses (3S)-3-hydroxybutanoyl-CoA = (3R)-3-hydroxybutanoyl-CoA. The catalysed reaction is a (3Z)-enoyl-CoA = a 4-saturated (2E)-enoyl-CoA. It catalyses the reaction a (3E)-enoyl-CoA = a 4-saturated (2E)-enoyl-CoA. It functions in the pathway lipid metabolism; fatty acid beta-oxidation. Its function is as follows. Involved in the aerobic and anaerobic degradation of long-chain fatty acids via beta-oxidation cycle. Catalyzes the formation of 3-oxoacyl-CoA from enoyl-CoA via L-3-hydroxyacyl-CoA. It can also use D-3-hydroxyacyl-CoA and cis-3-enoyl-CoA as substrate. The sequence is that of Fatty acid oxidation complex subunit alpha from Salmonella choleraesuis (strain SC-B67).